Here is a 226-residue protein sequence, read N- to C-terminus: 2-C-methyl-D-erythritol 4-phosphate cytidylyltransferase (226 aa).

The protein belongs to the IspD/TarI cytidylyltransferase family. IspD subfamily.

The catalysed reaction is 2-C-methyl-D-erythritol 4-phosphate + CTP + H(+) = 4-CDP-2-C-methyl-D-erythritol + diphosphate. The protein operates within isoprenoid biosynthesis; isopentenyl diphosphate biosynthesis via DXP pathway; isopentenyl diphosphate from 1-deoxy-D-xylulose 5-phosphate: step 2/6. In terms of biological role, catalyzes the formation of 4-diphosphocytidyl-2-C-methyl-D-erythritol from CTP and 2-C-methyl-D-erythritol 4-phosphate (MEP). This is 2-C-methyl-D-erythritol 4-phosphate cytidylyltransferase from Actinobacillus pleuropneumoniae serotype 7 (strain AP76).